The following is a 46-amino-acid chain: MAKGKFERSKPHVNVGTIGHVDHGKTTLTAALTTILAEKFGGQAKA.

Residues Met-1–Lys-10 show a composition bias toward basic and acidic residues. The disordered stretch occupies residues Met-1 to His-20. Gly-19–Thr-26 is a binding site for GTP.

It belongs to the GTP-binding elongation factor family. EF-Tu/EF-1A subfamily. As to quaternary structure, monomer.

The protein localises to the cytoplasm. In terms of biological role, this protein promotes the GTP-dependent binding of aminoacyl-tRNA to the A-site of ribosomes during protein biosynthesis. The chain is Elongation factor Tu (tufA) from Eikenella corrodens.